Consider the following 461-residue polypeptide: MEPAPDAQEARTVREALGRYEAALEGAVRALHEDMRGLQRGVERRVAEAMRLAGPLARTVADLQRDNQRLQAQLERLTRQVEALGLASGMSPVPGTPGTPSPPPAPGVPDRAPRLGSARFASHATFSLSGRGQSLDHDEASESEMRKTSNSCIMENGHQPGAGPGDGPPEIAQNFSAPDPPRPRPVSLSLRLPHQPVTAITRVSDRFSGETSAAALSPMSAATLGGLNPSPSEVITPWTPSPSEKNSSFTWSVPSSGYGAVTASKHSNSPPLVTPPQSPVSPQPPAITQVHRQGERRRELVRSQTLPRTSEAQARKALFEKWEQETAAGKGKGEARARLKRSQSFGVASASSIKQILLEWCRSKTLGYQHVDLQNFSSSWSDGMAFCALVHSFFPDAFDYNSLSPTQRQKNFELAFTMAENLANCERLIEVEDMMVMGRKPDPMCVFTYVQSLYNHLRRFE.

A coiled-coil region spans residues 55 to 88; it reads PLARTVADLQRDNQRLQAQLERLTRQVEALGLAS. Disordered regions lie at residues 87–193 and 227–248; these read ASGM…LRLP and LNPS…KNSS. A compositionally biased stretch (pro residues) spans 94–107; it reads PGTPGTPSPPPAPG. Position 96 is a phosphothreonine (threonine 96). Phosphoserine is present on residues serine 101, serine 129, and serine 134. Basic and acidic residues predominate over residues 134 to 147; it reads SLDHDEASESEMRK. Residues serine 256 and serine 269 each carry the phosphoserine modification. The segment at 260–307 is disordered; the sequence is AVTASKHSNSPPLVTPPQSPVSPQPPAITQVHRQGERRRELVRSQTLP. Pro residues predominate over residues 272–285; sequence LVTPPQSPVSPQPP. Position 274 is a phosphothreonine (threonine 274). A Phosphoserine modification is found at serine 278. Positions 292–301 are enriched in basic and acidic residues; it reads RQGERRRELV. Serine 344 carries the phosphoserine modification. Residues 351 to 458 enclose the Calponin-homology (CH) domain; sequence SSIKQILLEW…YVQSLYNHLR (108 aa).

This sequence belongs to the smoothelin family.

The polypeptide is Smoothelin-like protein 2 (SMTNL2) (Homo sapiens (Human)).